The following is a 121-amino-acid chain: Large ribosomal subunit protein uL22c (121 aa).

Belongs to the universal ribosomal protein uL22 family. As to quaternary structure, part of the 50S ribosomal subunit.

Its subcellular location is the plastid. It localises to the chloroplast. Its function is as follows. This protein binds specifically to 23S rRNA. In terms of biological role, the globular domain of the protein is located near the polypeptide exit tunnel on the outside of the subunit, while an extended beta-hairpin is found that lines the wall of the exit tunnel in the center of the 70S ribosome. The polypeptide is Large ribosomal subunit protein uL22c (rpl22) (Guillardia theta (Cryptophyte)).